The following is a 522-amino-acid chain: MTDFAARLKKVASNPEVFKQFGRGVERETLRYRQDGHLATTPHPEGLGSAFTNKWITTDFSESLLEFITPVSHDIPELMAQLKDIHHFTQTKMGEEKMWPLSMPCYVGSEDDIQLAQYGSSNSAKMKTLYREGLKRRYGSLMQIISGVHFNFSFPESFWDALYGEQDEQARQDTKSAAYFALIRNYYRFGWMIPYFFGASPALCGSFIQGRETKLPFESIGGTLYLPKATSLRLSDLGYTNSAQSVLKIGFNSIDQYLEGLGDAIRRPSEEFAKIGVKVDGEYRQLNTNILQIENELYAPIRPKRVAKSGEKPSDALSRAGVEYIEVRSLDVNPFSAVGVSEEQVRFLDLFLTWAALSDSDPMDNCELECWRDNWNKVIISGREKGLMLQIGCQGERLSLQDWAKRVFVELRQIAVEMDSAAGGDAYQAVCDKLEAWIDNPELTISGQLLELTKELGGLGKVGCALGMKFREENLAHGYQHYSQDIMETEVASSVEKQRKAEESDTLSFDEFLENYFAYLKQ.

This sequence belongs to the glutamate--cysteine ligase type 1 family. Type 1 subfamily.

The enzyme catalyses L-cysteine + L-glutamate + ATP = gamma-L-glutamyl-L-cysteine + ADP + phosphate + H(+). It participates in sulfur metabolism; glutathione biosynthesis; glutathione from L-cysteine and L-glutamate: step 1/2. The sequence is that of Glutamate--cysteine ligase from Vibrio parahaemolyticus serotype O3:K6 (strain RIMD 2210633).